Here is a 63-residue protein sequence, read N- to C-terminus: U-reduvitoxin-Pr9a (63 aa).

An N-terminal signal peptide occupies residues 1 to 19; it reads MRFFSLFTFLVAFIAAALA. A propeptide spanning residues 20 to 42 is cleaved from the precursor; it reads APVEIGEDLFALRPTGAKRDIIL. A disulfide bridge links cysteine 47 with cysteine 60.

In terms of tissue distribution, expressed by the venom gland.

Its subcellular location is the secreted. This is U-reduvitoxin-Pr9a from Platymeris rhadamanthus (Red spot assassin bug).